Reading from the N-terminus, the 147-residue chain is Hemoglobin subunit beta (147 aa).

Val-2 carries the post-translational modification N-acetylvaline. Residues 3–147 (HLTGEEKAAV…VANALAHKYH (145 aa)) form the Globin domain. Position 13 is a phosphothreonine (Thr-13). Ser-45 is subject to Phosphoserine. Position 60 is an N6-acetyllysine (Lys-60). His-64 contacts heme b. Lys-83 carries the N6-acetyllysine modification. Position 93 (His-93) interacts with heme b. Cys-94 carries the S-nitrosocysteine modification. Lys-145 carries the post-translational modification N6-acetyllysine.

It belongs to the globin family. As to quaternary structure, heterotetramer of two alpha chains and two beta chains. As to expression, red blood cells.

Involved in oxygen transport from the lung to the various peripheral tissues. The polypeptide is Hemoglobin subunit beta (HBB) (Aotus azarae (Azara's night monkey)).